Here is a 495-residue protein sequence, read N- to C-terminus: DNA double-strand break repair helicase HerA (495 aa).

Residues Arg142, 151–156 (GSGKSN), and 459–460 (KI) each bind ATP.

The protein belongs to the HerA family. In terms of assembly, interacts with Rad50 and Mre11.

The catalysed reaction is Couples ATP hydrolysis with the unwinding of duplex DNA at the replication fork by translocating in the 5'-3' direction. This creates two antiparallel DNA single strands (ssDNA). The leading ssDNA polymer is the template for DNA polymerase III holoenzyme which synthesizes a continuous strand.. The enzyme catalyses ATP + H2O = ADP + phosphate + H(+). It carries out the reaction Couples ATP hydrolysis with the unwinding of duplex DNA by translocating in the 3'-5' direction.. ATPase activity is slightly stimulated by either circular single- or double-stranded (ds)DNA with a weak preference for dsDNA. Functionally, involved in DNA double-strand break (DSB) repair. Probably acts with NurA to stimulate resection of the 5' strand and produce the long 3' single-strand that is required for RadA loading. Has DNA-dependent ATPase activity and bidirectional DNA helicase activity. Loads on either a 3' or a 5' DNA tail for subsequent DNA unwinding; has no activity on blunt-end DNA. The chain is DNA double-strand break repair helicase HerA from Sulfolobus acidocaldarius (strain ATCC 33909 / DSM 639 / JCM 8929 / NBRC 15157 / NCIMB 11770).